A 169-amino-acid polypeptide reads, in one-letter code: UPF0303 protein BMEI0598 (169 aa).

Belongs to the UPF0303 family.

This is UPF0303 protein BMEI0598 from Brucella melitensis biotype 1 (strain ATCC 23456 / CCUG 17765 / NCTC 10094 / 16M).